Reading from the N-terminus, the 383-residue chain is 1-deoxy-D-xylulose 5-phosphate reductoisomerase (383 aa).

Residues threonine 10, glycine 11, serine 12, isoleucine 13, asparagine 38, and asparagine 121 each contribute to the NADPH site. 1-deoxy-D-xylulose 5-phosphate is bound at residue lysine 122. Position 123 (glutamate 123) interacts with NADPH. Mn(2+) is bound at residue aspartate 147. Positions 148, 149, 172, and 195 each coordinate 1-deoxy-D-xylulose 5-phosphate. Position 149 (glutamate 149) interacts with Mn(2+). Glycine 201 serves as a coordination point for NADPH. 4 residues coordinate 1-deoxy-D-xylulose 5-phosphate: serine 208, asparagine 213, lysine 214, and glutamate 217. Glutamate 217 lines the Mn(2+) pocket.

Belongs to the DXR family. Mg(2+) serves as cofactor. The cofactor is Mn(2+).

The enzyme catalyses 2-C-methyl-D-erythritol 4-phosphate + NADP(+) = 1-deoxy-D-xylulose 5-phosphate + NADPH + H(+). It participates in isoprenoid biosynthesis; isopentenyl diphosphate biosynthesis via DXP pathway; isopentenyl diphosphate from 1-deoxy-D-xylulose 5-phosphate: step 1/6. In terms of biological role, catalyzes the NADPH-dependent rearrangement and reduction of 1-deoxy-D-xylulose-5-phosphate (DXP) to 2-C-methyl-D-erythritol 4-phosphate (MEP). The sequence is that of 1-deoxy-D-xylulose 5-phosphate reductoisomerase from Ruthia magnifica subsp. Calyptogena magnifica.